Reading from the N-terminus, the 761-residue chain is Ribonucleoside-diphosphate reductase 1 subunit alpha (761 aa).

Residues 5–95 (LLVTKRDGST…IFHLRKKAYG (91 aa)) enclose the ATP-cone domain. Residues lysine 9, 15–21 (ERINLDK), threonine 55, and lysine 91 contribute to the ATP site. Position 209 (threonine 209) interacts with GDP. An intrachain disulfide couples cysteine 225 to cysteine 462. DTTP-binding positions include 232 to 234 (DSL), arginine 262, and arginine 269. Lysine 283 is subject to N6-acetyllysine. A GDP-binding site is contributed by asparagine 437. Asparagine 437 functions as the Proton acceptor in the catalytic mechanism. Catalysis depends on cysteine 439, which acts as the Cysteine radical intermediate. GDP-binding positions include glutamate 441 and 623–625 (ETS). The active-site Proton acceptor is glutamate 441.

It belongs to the ribonucleoside diphosphate reductase large chain family. Tetramer of two alpha (R1) and two beta (R2) subunits. The B1 protein is a dimer of alpha subunits. A radical transfer pathway occurs between 'Tyr-122' of R2 and R1. In terms of processing, binding of the substrate occurs primarily when the active-site cysteines are reduced.

It catalyses the reaction a 2'-deoxyribonucleoside 5'-diphosphate + [thioredoxin]-disulfide + H2O = a ribonucleoside 5'-diphosphate + [thioredoxin]-dithiol. Its activity is regulated as follows. Under complex allosteric control mediated by deoxynucleoside triphosphates and ATP binding to separate specificity and activation sites on the alpha subunit. The type of nucleotide bound at the specificity site determines substrate preference. It seems probable that ATP makes the enzyme reduce CDP and UDP, dGTP favors ADP reduction and dTTP favors GDP reduction. Stimulated by ATP and inhibited by dATP binding to the activity site. In vitro, its activity is increased by dithiothreitol (DTT) or thioredoxins (non-specific). Inhibited by hydroxyurea, leads to dNTP depletion, replication fork arrest and genomic instability. In terms of biological role, provides the precursors necessary for DNA synthesis. Catalyzes the biosynthesis of deoxyribonucleotides from the corresponding ribonucleotides. R1 contains the binding sites for both substrates and allosteric effectors and carries out the actual reduction of the ribonucleotide. It also provides redox-active cysteines. This chain is Ribonucleoside-diphosphate reductase 1 subunit alpha (nrdA), found in Escherichia coli (strain K12).